The following is a 192-amino-acid chain: Fe/S biogenesis protein NfuA (192 aa).

[4Fe-4S] cluster contacts are provided by Cys-149 and Cys-152.

It belongs to the NfuA family. In terms of assembly, homodimer. It depends on [4Fe-4S] cluster as a cofactor.

In terms of biological role, involved in iron-sulfur cluster biogenesis. Binds a 4Fe-4S cluster, can transfer this cluster to apoproteins, and thereby intervenes in the maturation of Fe/S proteins. Could also act as a scaffold/chaperone for damaged Fe/S proteins. The sequence is that of Fe/S biogenesis protein NfuA from Pseudoalteromonas atlantica (strain T6c / ATCC BAA-1087).